Consider the following 95-residue polypeptide: NLFQFEKLIKKSGMLWYSAYGCYCGWGGQGRPKDATDRCCFVHDCCYGKVTGCNPKCGGTNPCKKQICECDRAAAICFRDNLKTYDSKTYWKYPK.

N6-palmitoyl lysine attachment occurs at residues K7 and K10. Y23, G25, and G27 together coordinate Ca(2+). Cystine bridges form between C24–C40, C39–C77, C46–C70, C53–C63, and C57–C68. H43 is an active-site residue. A Ca(2+)-binding site is contributed by D44. D71 is a catalytic residue.

In terms of assembly, monomer. Ca(2+) is required as a cofactor. In terms of tissue distribution, expressed by the venom gland.

The protein localises to the secreted. It catalyses the reaction a 1,2-diacyl-sn-glycero-3-phosphocholine + H2O = a 1-acyl-sn-glycero-3-phosphocholine + a fatty acid + H(+). In terms of biological role, PLA2 catalyzes the calcium-dependent hydrolysis of the 2-acyl groups in 3-sn-phosphoglycerides. Induces local and systemic myotoxicity in an intramuscular mouse model. Induces local edema in a mouse footpad assay. Does not exhibit any anticoagulant effects. Does not mediate an antibacterial effect against Gram-negative and Gram-positive bacteria. In Agkistrodon piscivorus leucostoma (Western cottonmouth), this protein is Basic phospholipase A2.